The following is a 301-amino-acid chain: Asialoglycoprotein receptor 2 (301 aa).

The disordered stretch occupies residues 1-43; that stretch reads MEKDCQDIQQLDSEENDHQLSGDDEHGSHVQDPRIENPHWKGQ. Topologically, residues 1 to 58 are cytoplasmic; sequence MEKDCQDIQQLDSEENDHQLSGDDEHGSHVQDPRIENPHWKGQPLSRPFPQRLCSTFR. The residue at position 13 (S13) is a Phosphoserine. Basic and acidic residues predominate over residues 16-39; that stretch reads NDHQLSGDDEHGSHVQDPRIENPH. C54 is lipidated: S-palmitoyl cysteine. The chain crosses the membrane as a helical; Signal-anchor for type II membrane protein span at residues 59-79; it reads LSLLALAFNILLLVVICVVSS. Residues 80–301 lie on the Extracellular side of the membrane; the sequence is QSIQLQEEFR…VCEKRRNITH (222 aa). 2 N-linked (GlcNAc...) asparagine glycosylation sites follow: N97 and N165. The region spanning 169 to 295 is the C-type lectin domain; sequence CCPVNWVEFG…QQVNRWVCEK (127 aa). 3 cysteine pairs are disulfide-bonded: C170–C181, C198–C293, and C271–C285. N298 carries an N-linked (GlcNAc...) asparagine glycan.

As to quaternary structure, interacts with LASS2. Expressed exclusively in hepatic parenchymal cells.

The protein resides in the membrane. Mediates the endocytosis of plasma glycoproteins to which the terminal sialic acid residue on their complex carbohydrate moieties has been removed. The receptor recognizes terminal galactose and N-acetylgalactosamine units. After ligand binding to the receptor, the resulting complex is internalized and transported to a sorting organelle, where receptor and ligand are disassociated. The receptor then returns to the cell membrane surface. The polypeptide is Asialoglycoprotein receptor 2 (Asgr2) (Mus musculus (Mouse)).